An 826-amino-acid polypeptide reads, in one-letter code: Sister chromatid cohesion protein PDS5 homolog D (826 aa).

HEAT repeat units lie at residues 18 to 54 (GTNLLSPPSSTDDLLTLLDETESLLKNVEQDQPLSMQ), 55 to 94 (SALIPSRNALVSVDLLSHPDSDVRVSVVSCLTEIVRITAP), 151 to 188 (DLILQMFRNFFKFIRSDHPQLVFSSMELIMIAIIDETE), 189 to 226 (QVSTDLLDSLLATVKKENQNVSPMSWSLAEKVLSRCAR), and 230 to 267 (PYIIEALKSRGTSLDMYSPVVSSICQSVFNTPKVHSPV). 2 disordered regions span residues 261–551 (PKVH…EVES) and 640–826 (KKSK…KRKS). 2 stretches are compositionally biased toward basic and acidic residues: residues 269 to 286 (TKEHEEKLDLGHSRKENL) and 296 to 309 (RHETRGINEKEKVR). Positions 281 to 288 (SRKENLSK) match the Nuclear localization signal 1 motif. Positions 311-323 (GNKSSLLKQSLKQ) are enriched in polar residues. Positions 357 to 364 (GKRDPLKT) match the Nuclear localization signal 2 motif. Over residues 396-408 (SPATSSRSLTGSL) the composition is skewed to polar residues. One copy of the HEAT 6 repeat lies at 424 to 461 (SLSSPRLKKLASCFRDEEPNQEDDRKIGNSSKQTRSKN). Residues 437 to 450 (FRDEEPNQEDDRKI) are compositionally biased toward basic and acidic residues. Residues 451 to 460 (GNSSKQTRSK) show a composition bias toward polar residues. Low complexity predominate over residues 644 to 663 (NVAVSVEPTSSSGVRSSSRT). A compositionally biased stretch (basic and acidic residues) spans 665–701 (MKKDCGKRLNKQVEKTREGKNLRSLKELNAETDRTAE). A compositionally biased stretch (acidic residues) spans 702–724 (EQEVSLEAESDDRSEEQEYEDDC). Positions 725-746 (SDKKEQSQDKGVEAETKEEEKQ) are enriched in basic and acidic residues. Acidic residues-rich tracts occupy residues 752-763 (GESEGEDSESEE), 771-800 (DDMEDDEEEEEEEIDHMEDEAEEEKEEVDD), and 811-826 (EKEEEEEEEDEEKRKS). Positions 770-825 (TDDMEDDEEEEEEEIDHMEDEAEEEKEEVDDKEASANMSEIEKEEEEEEEDEEKRK) form a coiled coil.

This sequence belongs to the PDS5 family. In terms of assembly, interacts with the cohesin complex.

The protein resides in the nucleus. In terms of biological role, cohesin cofactor dispensable during the meiotic division but playing an important role in DNA repair by homologous recombination (HR) probably by helping SMC5/SMC6 complex. Regulator of sister chromatid cohesion in mitosis which may stabilize cohesin complex association with chromatin. May couple sister chromatid cohesion during mitosis to DNA replication. Cohesion ensures that chromosome partitioning is accurate in both meiotic and mitotic cells and plays an important role in DNA repair. The chain is Sister chromatid cohesion protein PDS5 homolog D from Arabidopsis thaliana (Mouse-ear cress).